The chain runs to 318 residues: Ribonuclease Z (318 aa).

7 residues coordinate Zn(2+): His-63, His-65, Asp-67, His-68, His-142, Asp-213, and His-273. The Proton acceptor role is filled by Asp-67.

This sequence belongs to the RNase Z family. As to quaternary structure, homodimer. Requires Zn(2+) as cofactor.

It carries out the reaction Endonucleolytic cleavage of RNA, removing extra 3' nucleotides from tRNA precursor, generating 3' termini of tRNAs. A 3'-hydroxy group is left at the tRNA terminus and a 5'-phosphoryl group is left at the trailer molecule.. Zinc phosphodiesterase, which displays some tRNA 3'-processing endonuclease activity. Probably involved in tRNA maturation, by removing a 3'-trailer from precursor tRNA. This is Ribonuclease Z from Leuconostoc mesenteroides subsp. mesenteroides (strain ATCC 8293 / DSM 20343 / BCRC 11652 / CCM 1803 / JCM 6124 / NCDO 523 / NBRC 100496 / NCIMB 8023 / NCTC 12954 / NRRL B-1118 / 37Y).